We begin with the raw amino-acid sequence, 118 residues long: Small ribosomal subunit protein uS13 (118 aa).

A disordered region spans residues Gly94–Lys118.

It belongs to the universal ribosomal protein uS13 family. Part of the 30S ribosomal subunit. Forms a loose heterodimer with protein S19. Forms two bridges to the 50S subunit in the 70S ribosome.

In terms of biological role, located at the top of the head of the 30S subunit, it contacts several helices of the 16S rRNA. In the 70S ribosome it contacts the 23S rRNA (bridge B1a) and protein L5 of the 50S subunit (bridge B1b), connecting the 2 subunits; these bridges are implicated in subunit movement. Contacts the tRNAs in the A and P-sites. This is Small ribosomal subunit protein uS13 from Shigella dysenteriae serotype 1 (strain Sd197).